An 874-amino-acid polypeptide reads, in one-letter code: Alanine--tRNA ligase (874 aa).

Zn(2+) is bound by residues histidine 562, histidine 566, cysteine 665, and histidine 669.

The protein belongs to the class-II aminoacyl-tRNA synthetase family. Zn(2+) is required as a cofactor.

It is found in the cytoplasm. The catalysed reaction is tRNA(Ala) + L-alanine + ATP = L-alanyl-tRNA(Ala) + AMP + diphosphate. In terms of biological role, catalyzes the attachment of alanine to tRNA(Ala) in a two-step reaction: alanine is first activated by ATP to form Ala-AMP and then transferred to the acceptor end of tRNA(Ala). Also edits incorrectly charged Ser-tRNA(Ala) and Gly-tRNA(Ala) via its editing domain. The protein is Alanine--tRNA ligase of Pseudomonas syringae pv. tomato (strain ATCC BAA-871 / DC3000).